A 356-amino-acid polypeptide reads, in one-letter code: Holliday junction branch migration complex subunit RuvB (356 aa).

Residues 13–201 (SSNLSRKTRL…FGITQRLNFY (189 aa)) are large ATPase domain (RuvB-L). The interval 15–35 (NLSRKTRLLDPTPSLEEGKVR) is disordered. ATP contacts are provided by residues leucine 40, arginine 41, glycine 82, lysine 85, threonine 86, threonine 87, 148–150 (EDF), arginine 191, tyrosine 201, and arginine 238. Mg(2+) is bound at residue threonine 86. Residues 202-273 (SISDLNRIIQ…LVDKSLTLHQ (72 aa)) form a small ATPAse domain (RuvB-S) region. Positions 276-356 (ECGLDQSDRR…NSCKNSPIIK (81 aa)) are head domain (RuvB-H). Residues arginine 331 and arginine 336 each contribute to the DNA site.

Belongs to the RuvB family. Homohexamer. Forms an RuvA(8)-RuvB(12)-Holliday junction (HJ) complex. HJ DNA is sandwiched between 2 RuvA tetramers; dsDNA enters through RuvA and exits via RuvB. An RuvB hexamer assembles on each DNA strand where it exits the tetramer. Each RuvB hexamer is contacted by two RuvA subunits (via domain III) on 2 adjacent RuvB subunits; this complex drives branch migration. In the full resolvosome a probable DNA-RuvA(4)-RuvB(12)-RuvC(2) complex forms which resolves the HJ.

It localises to the cytoplasm. It catalyses the reaction ATP + H2O = ADP + phosphate + H(+). The RuvA-RuvB-RuvC complex processes Holliday junction (HJ) DNA during genetic recombination and DNA repair, while the RuvA-RuvB complex plays an important role in the rescue of blocked DNA replication forks via replication fork reversal (RFR). RuvA specifically binds to HJ cruciform DNA, conferring on it an open structure. The RuvB hexamer acts as an ATP-dependent pump, pulling dsDNA into and through the RuvAB complex. RuvB forms 2 homohexamers on either side of HJ DNA bound by 1 or 2 RuvA tetramers; 4 subunits per hexamer contact DNA at a time. Coordinated motions by a converter formed by DNA-disengaged RuvB subunits stimulates ATP hydrolysis and nucleotide exchange. Immobilization of the converter enables RuvB to convert the ATP-contained energy into a lever motion, pulling 2 nucleotides of DNA out of the RuvA tetramer per ATP hydrolyzed, thus driving DNA branch migration. The RuvB motors rotate together with the DNA substrate, which together with the progressing nucleotide cycle form the mechanistic basis for DNA recombination by continuous HJ branch migration. Branch migration allows RuvC to scan DNA until it finds its consensus sequence, where it cleaves and resolves cruciform DNA. The protein is Holliday junction branch migration complex subunit RuvB of Prochlorococcus marinus (strain SARG / CCMP1375 / SS120).